The chain runs to 133 residues: Cytidine deaminase (133 aa).

Residues 4 to 126 enclose the CMP/dCMP-type deaminase domain; it reads VDWNMLRGNA…DLLPDAFGLD (123 aa). 45–47 is a substrate binding site; sequence NVE. Cysteine 56 serves as a coordination point for Zn(2+). Glutamate 58 serves as the catalytic Proton donor. 2 residues coordinate Zn(2+): cysteine 89 and cysteine 92.

This sequence belongs to the cytidine and deoxycytidylate deaminase family. As to quaternary structure, homotetramer. Zn(2+) serves as cofactor.

The catalysed reaction is cytidine + H2O + H(+) = uridine + NH4(+). It catalyses the reaction 2'-deoxycytidine + H2O + H(+) = 2'-deoxyuridine + NH4(+). Its function is as follows. Recycles cytidine and 2-deoxycytidine for uridine and 2-deoxyuridine synthesis, respectively. Catalyzes the hydrolytic deamination of cytidine and 2-deoxycytidine to form, respectively, uridine and 2-deoxyuridine. The protein is Cytidine deaminase (cdd) of Mycobacterium tuberculosis (strain CDC 1551 / Oshkosh).